The following is a 118-amino-acid chain: Vesicle-associated membrane protein 1 (118 aa).

Residues 1-36 (MSAPAQPPAEGTEGTAPGGGPPGPPPNMTSNRRLQQ) form a disordered region. At 1–96 (MSAPAQPPAE…KRKYWWKNCK (96 aa)) the chain is on the cytoplasmic side. In terms of domain architecture, v-SNARE coiled-coil homology spans 33 to 93 (RLQQTQAQVE…AKLKRKYWWK (61 aa)). The residue at position 63 (S63) is a Phosphoserine. A helical; Anchor for type IV membrane protein membrane pass occupies residues 97 to 116 (MMIMLGAICAIIVVVIVIYF). At 117–118 (FT) the chain is on the vesicular side.

This sequence belongs to the synaptobrevin family. In terms of assembly, interacts with VAPA and VAPB. Post-translationally, (Microbial infection) Targeted and hydrolyzed by C.botulinum neurotoxin type B (BoNT/B, botB) which probably hydrolyzes the 78-Gln-|-Phe-79 bond and inhibits neurotransmitter release. In terms of processing, (Microbial infection) Targeted and hydrolyzed by C.botulinum neurotoxin type D (BoNT/D, botD) which probably hydrolyzes the 61-Arg-|-Leu-62 bond and inhibits neurotransmitter release. BoNT/D has low catalytic activity on this protein due to its sequence. Note that humans are not known to be infected by C.botulinum type D. (Microbial infection) Targeted and hydrolyzed by C.botulinum neurotoxin type F (BoNT/F, botF) which probably hydrolyzes the 60-Gln-|-Lys-61 bond and inhibits neurotransmitter release. Post-translationally, (Microbial infection) Targeted and hydrolyzed by C.botulinum neurotoxin type X (BoNT/X) which probably hydrolyzes the 68-Arg-|-Ala-69 bond and inhibits neurotransmitter release. It remains unknown whether BoNT/X is ever produced, or what organisms it targets. In terms of tissue distribution, nervous system, skeletal muscle and adipose tissue.

It localises to the cytoplasmic vesicle. It is found in the secretory vesicle. The protein resides in the synaptic vesicle membrane. Its subcellular location is the synapse. The protein localises to the synaptosome. It localises to the cytoplasmic vesicle membrane. It is found in the mitochondrion outer membrane. Functionally, involved in the targeting and/or fusion of transport vesicles to their target membrane. The sequence is that of Vesicle-associated membrane protein 1 (VAMP1) from Homo sapiens (Human).